We begin with the raw amino-acid sequence, 247 residues long: Germin-like protein 9-1 (247 aa).

An N-terminal signal peptide occupies residues 1-25 (MMMSSRSSVSLGVLLLLAVILSAGA). Residues 53–201 (KNLVTGNSGD…SMHTDQATVD (149 aa)) form the Cupin type-1 domain. Residues His100, His102, and Glu107 each coordinate Mn(2+). Asn126 is a glycosylation site (N-linked (GlcNAc...) asparagine). His148 is a Mn(2+) binding site. The N-linked (GlcNAc...) asparagine glycan is linked to Asn153.

Belongs to the germin family. As to quaternary structure, oligomer (believed to be a pentamer but probably hexamer).

The protein resides in the secreted. The protein localises to the extracellular space. It is found in the apoplast. Functionally, may play a role in plant defense. Probably has no oxalate oxidase activity even if the active site is conserved. This Oryza sativa subsp. japonica (Rice) protein is Germin-like protein 9-1.